Consider the following 472-residue polypeptide: 3-isopropylmalate dehydratase large subunit (472 aa).

3 residues coordinate [4Fe-4S] cluster: Cys-349, Cys-409, and Cys-412.

The protein belongs to the aconitase/IPM isomerase family. LeuC type 1 subfamily. As to quaternary structure, heterodimer of LeuC and LeuD. It depends on [4Fe-4S] cluster as a cofactor.

It carries out the reaction (2R,3S)-3-isopropylmalate = (2S)-2-isopropylmalate. It participates in amino-acid biosynthesis; L-leucine biosynthesis; L-leucine from 3-methyl-2-oxobutanoate: step 2/4. Catalyzes the isomerization between 2-isopropylmalate and 3-isopropylmalate, via the formation of 2-isopropylmaleate. In Rhodospirillum rubrum (strain ATCC 11170 / ATH 1.1.1 / DSM 467 / LMG 4362 / NCIMB 8255 / S1), this protein is 3-isopropylmalate dehydratase large subunit.